A 121-amino-acid polypeptide reads, in one-letter code: Group 1 truncated hemoglobin (121 aa).

At M1 the chain carries N-acetylmethionine. Residue H73 coordinates heme.

Belongs to the truncated hemoglobin family. Group I subfamily. Monomer. Requires heme as cofactor.

The protein is Group 1 truncated hemoglobin of Tetrahymena thermophila.